A 181-amino-acid polypeptide reads, in one-letter code: Cyclic AMP-dependent transcription factor ATF-3 (181 aa).

Lys-78 participates in a covalent cross-link: Glycyl lysine isopeptide (Lys-Gly) (interchain with G-Cter in SUMO2). The region spanning 86-149 is the bZIP domain; it reads DERKKRRRER…QHLIYMLNLH (64 aa). Residues 88–110 form a basic motif region; sequence RKKRRRERNKIAAAKCRNKKKEK. The leucine-zipper stretch occupies residues 114 to 142; sequence LQKESEKLESVNAELKAQIEELKNEKQHL. Phosphothreonine is present on Thr-162. Lys-175 is covalently cross-linked (Glycyl lysine isopeptide (Lys-Gly) (interchain with G-Cter in SUMO2)).

It belongs to the bZIP family. ATF subfamily. Binds DNA as a homodimer or a heterodimer. Interacts with KAT5; promoting KAT5 autoacetylation and KAT5 deubiquitination by USP7.

The protein localises to the nucleus. Functionally, this protein binds the cAMP response element (CRE) (consensus: 5'-GTGACGT[AC][AG]-3'), a sequence present in many viral and cellular promoters. Represses transcription from promoters with ATF sites. It may repress transcription by stabilizing the binding of inhibitory cofactors at the promoter. Its function is as follows. Activates transcription presumably by sequestering inhibitory cofactors away from the promoters. Stress-induced isoform, counteracts the transcriptional repression of isoform 1. The polypeptide is Cyclic AMP-dependent transcription factor ATF-3 (Homo sapiens (Human)).